Here is a 153-residue protein sequence, read N- to C-terminus: Endoribonuclease YbeY (153 aa).

Residues histidine 114, histidine 118, and histidine 124 each coordinate Zn(2+).

This sequence belongs to the endoribonuclease YbeY family. Requires Zn(2+) as cofactor.

The protein resides in the cytoplasm. Functionally, single strand-specific metallo-endoribonuclease involved in late-stage 70S ribosome quality control and in maturation of the 3' terminus of the 16S rRNA. This chain is Endoribonuclease YbeY, found in Shewanella oneidensis (strain ATCC 700550 / JCM 31522 / CIP 106686 / LMG 19005 / NCIMB 14063 / MR-1).